The primary structure comprises 423 residues: Histidine--tRNA ligase (423 aa).

Belongs to the class-II aminoacyl-tRNA synthetase family. Homodimer.

The protein localises to the cytoplasm. It catalyses the reaction tRNA(His) + L-histidine + ATP = L-histidyl-tRNA(His) + AMP + diphosphate + H(+). This is Histidine--tRNA ligase from Orientia tsutsugamushi (strain Boryong) (Rickettsia tsutsugamushi).